A 469-amino-acid polypeptide reads, in one-letter code: Phosphatidylinositol 4-kinase type 2-alpha (469 aa).

Disordered stretches follow at residues 1 to 30 (MDET…ATVP) and 50 to 72 (TATS…DQER). A compositionally biased stretch (polar residues) spans 16 to 25 (EYSYQSQCSP). The span at 50 to 60 (TATSCGSAASG) shows a compositional bias: low complexity. The 329-residue stretch at 115–443 (DILPERISQG…VQTPPVIVET (329 aa)) folds into the PI3K/PI4K catalytic domain. The segment at 121–127 (ISQGSSG) is G-loop. Residues 122 to 128 (SQGSSGS) and Lys-143 contribute to the ATP site. Residues 148 to 150 (EPY) are important for substrate binding. The segment at 156 to 169 (KWTKWLQKLCCPCC) is important for interaction with membranes. 4 S-palmitoyl cysteine lipidation sites follow: Cys-165, Cys-166, Cys-168, and Cys-169. 252–255 (QIFV) is an ATP binding site. Positions 259–267 (KDADYWLRR) are important for interaction with membranes. A catalytic loop region spans residues 296 to 304 (RNTDRGNDN). The tract at residues 334–354 (AIDNGLAFPLKHPDSWRAYPF) is activation loop. ATP is bound at residue Asp-336. The interval 349-358 (WRAYPFYWAW) is important for interaction with membranes.

The protein belongs to the PI3/PI4-kinase family. Type II PI4K subfamily.

It is found in the golgi apparatus. Its subcellular location is the trans-Golgi network membrane. The protein resides in the membrane raft. The protein localises to the endosome. It localises to the endosome membrane. It is found in the cytoplasmic vesicle. Its subcellular location is the cell projection. The protein resides in the dendrite. The protein localises to the presynaptic cell membrane. It localises to the synapse. It is found in the synaptosome. Its subcellular location is the mitochondrion. The protein resides in the membrane. The protein localises to the cell membrane. It localises to the perikaryon. It is found in the neuron projection. The catalysed reaction is a 1,2-diacyl-sn-glycero-3-phospho-(1D-myo-inositol) + ATP = a 1,2-diacyl-sn-glycero-3-phospho-(1D-myo-inositol 4-phosphate) + ADP + H(+). Its function is as follows. Membrane-bound phosphatidylinositol-4 kinase (PI4-kinase) that catalyzes the phosphorylation of phosphatidylinositol (PI) to phosphatidylinositol 4-phosphate (PI4P), a lipid that plays important roles in endocytosis, Golgi function, protein sorting and membrane trafficking. Besides, phosphorylation of phosphatidylinositol (PI) to phosphatidylinositol 4-phosphate (PI4P) is the first committed step in the generation of phosphatidylinositol 4,5-bisphosphate (PIP2), a precursor of the second messenger inositol 1,4,5-trisphosphate (InsP3). The sequence is that of Phosphatidylinositol 4-kinase type 2-alpha (pi4k2a) from Xenopus laevis (African clawed frog).